Consider the following 403-residue polypeptide: 4-hydroxy-3-methylbut-2-en-1-yl diphosphate synthase (flavodoxin) (403 aa).

Basic and acidic residues predominate over residues 1–16 (MNTENPIEKPFRKTGD). The tract at residues 1 to 31 (MNTENPIEKPFRKTGDPVDLTSESPLHPRRK) is disordered. The [4Fe-4S] cluster site is built by Cys-291, Cys-294, Cys-326, and Glu-333.

This sequence belongs to the IspG family. [4Fe-4S] cluster serves as cofactor.

It catalyses the reaction (2E)-4-hydroxy-3-methylbut-2-enyl diphosphate + oxidized [flavodoxin] + H2O + 2 H(+) = 2-C-methyl-D-erythritol 2,4-cyclic diphosphate + reduced [flavodoxin]. Its pathway is isoprenoid biosynthesis; isopentenyl diphosphate biosynthesis via DXP pathway; isopentenyl diphosphate from 1-deoxy-D-xylulose 5-phosphate: step 5/6. Converts 2C-methyl-D-erythritol 2,4-cyclodiphosphate (ME-2,4cPP) into 1-hydroxy-2-methyl-2-(E)-butenyl 4-diphosphate. The sequence is that of 4-hydroxy-3-methylbut-2-en-1-yl diphosphate synthase (flavodoxin) from Bifidobacterium longum (strain NCC 2705).